We begin with the raw amino-acid sequence, 184 residues long: GTP cyclohydrolase 1 (184 aa).

Residues C74, H77, and C145 each coordinate Zn(2+).

This sequence belongs to the GTP cyclohydrolase I family. Toroid-shaped homodecamer, composed of two pentamers of five dimers.

The enzyme catalyses GTP + H2O = 7,8-dihydroneopterin 3'-triphosphate + formate + H(+). Its pathway is cofactor biosynthesis; 7,8-dihydroneopterin triphosphate biosynthesis; 7,8-dihydroneopterin triphosphate from GTP: step 1/1. The protein is GTP cyclohydrolase 1 (folE) of Aquifex aeolicus (strain VF5).